The chain runs to 278 residues: Ribosomal RNA small subunit methyltransferase A (278 aa).

The S-adenosyl-L-methionine site is built by asparagine 28, leucine 30, glycine 55, glutamate 77, aspartate 103, and asparagine 122.

This sequence belongs to the class I-like SAM-binding methyltransferase superfamily. rRNA adenine N(6)-methyltransferase family. RsmA subfamily.

The protein resides in the cytoplasm. The enzyme catalyses adenosine(1518)/adenosine(1519) in 16S rRNA + 4 S-adenosyl-L-methionine = N(6)-dimethyladenosine(1518)/N(6)-dimethyladenosine(1519) in 16S rRNA + 4 S-adenosyl-L-homocysteine + 4 H(+). Functionally, specifically dimethylates two adjacent adenosines (A1518 and A1519) in the loop of a conserved hairpin near the 3'-end of 16S rRNA in the 30S particle. May play a critical role in biogenesis of 30S subunits. The polypeptide is Ribosomal RNA small subunit methyltransferase A (Cereibacter sphaeroides (strain ATCC 17023 / DSM 158 / JCM 6121 / CCUG 31486 / LMG 2827 / NBRC 12203 / NCIMB 8253 / ATH 2.4.1.) (Rhodobacter sphaeroides)).